The following is a 104-amino-acid chain: Integration host factor subunit alpha (104 aa).

Residues 51–70 are disordered; it reads GNFQLRDKPQRPGRNPKTGE.

Belongs to the bacterial histone-like protein family. Heterodimer of an alpha and a beta chain.

In terms of biological role, this protein is one of the two subunits of integration host factor, a specific DNA-binding protein that functions in genetic recombination as well as in transcriptional and translational control. The protein is Integration host factor subunit alpha of Ralstonia nicotianae (strain ATCC BAA-1114 / GMI1000) (Ralstonia solanacearum).